The primary structure comprises 244 residues: Transcriptional activator protein FnrA (244 aa).

The HTH crp-type domain occupies lysine 159–isoleucine 232. The H-T-H motif DNA-binding region spans arginine 192–threonine 211.

Functionally, transcriptional regulator of arginine deiminase. This is Transcriptional activator protein FnrA (fnrA) from Stutzerimonas stutzeri (Pseudomonas stutzeri).